Here is a 367-residue protein sequence, read N- to C-terminus: Beta sliding clamp (367 aa).

It belongs to the beta sliding clamp family. As to quaternary structure, forms a ring-shaped head-to-tail homodimer around DNA which binds and tethers DNA polymerases and other proteins to the DNA. The DNA replisome complex has a single clamp-loading complex (3 tau and 1 each of delta, delta', psi and chi subunits) which binds 3 Pol III cores (1 core on the leading strand and 2 on the lagging strand) each with a beta sliding clamp dimer. Additional proteins in the replisome are other copies of gamma, psi and chi, Ssb, DNA helicase and RNA primase.

It is found in the cytoplasm. Its function is as follows. Confers DNA tethering and processivity to DNA polymerases and other proteins. Acts as a clamp, forming a ring around DNA (a reaction catalyzed by the clamp-loading complex) which diffuses in an ATP-independent manner freely and bidirectionally along dsDNA. Initially characterized for its ability to contact the catalytic subunit of DNA polymerase III (Pol III), a complex, multichain enzyme responsible for most of the replicative synthesis in bacteria; Pol III exhibits 3'-5' exonuclease proofreading activity. The beta chain is required for initiation of replication as well as for processivity of DNA replication. This is Beta sliding clamp (dnaN) from Proteus mirabilis.